Here is a 420-residue protein sequence, read N- to C-terminus: Gamma-glutamyl phosphate reductase 2 (420 aa).

It belongs to the gamma-glutamyl phosphate reductase family.

It localises to the cytoplasm. The catalysed reaction is L-glutamate 5-semialdehyde + phosphate + NADP(+) = L-glutamyl 5-phosphate + NADPH + H(+). It participates in amino-acid biosynthesis; L-proline biosynthesis; L-glutamate 5-semialdehyde from L-glutamate: step 2/2. Catalyzes the NADPH-dependent reduction of L-glutamate 5-phosphate into L-glutamate 5-semialdehyde and phosphate. The product spontaneously undergoes cyclization to form 1-pyrroline-5-carboxylate. This chain is Gamma-glutamyl phosphate reductase 2, found in Synechocystis sp. (strain ATCC 27184 / PCC 6803 / Kazusa).